The primary structure comprises 302 residues: Nodulation protein D 3 (302 aa).

One can recognise an HTH lysR-type domain in the interval 6 to 63 (LDLNLLVALDALMIERNLTAAARSINLSQPAMSAAVRRLRSYFRDELFTMRGREFVPT). A DNA-binding region (H-T-H motif) is located at residues 23–42 (LTAAARSINLSQPAMSAAVR).

This sequence belongs to the LysR transcriptional regulatory family.

Its function is as follows. NodD regulates the expression of the nodABCFE genes which encode other nodulation proteins. NodD is also a negative regulator of its own expression. Binds flavonoids as inducers. This Rhizobium leguminosarum bv. phaseoli protein is Nodulation protein D 3 (nodD3).